The following is a 355-amino-acid chain: Ribosomal RNA small subunit methyltransferase H (355 aa).

S-adenosyl-L-methionine contacts are provided by residues 55–57, aspartate 75, aspartate 122, and glutamine 129; that span reads GGH. The segment at 327–355 is disordered; that stretch reads ERTSQPLPATGAEDFVPAVPGAAEKGRRR.

Belongs to the methyltransferase superfamily. RsmH family.

Its subcellular location is the cytoplasm. The enzyme catalyses cytidine(1402) in 16S rRNA + S-adenosyl-L-methionine = N(4)-methylcytidine(1402) in 16S rRNA + S-adenosyl-L-homocysteine + H(+). Specifically methylates the N4 position of cytidine in position 1402 (C1402) of 16S rRNA. This is Ribosomal RNA small subunit methyltransferase H from Bordetella avium (strain 197N).